A 569-amino-acid polypeptide reads, in one-letter code: Acetate/butyrate--CoA ligase AAE7, peroxisomal (569 aa).

Positions 567-569 (SRL) match the Microbody targeting signal motif.

It belongs to the ATP-dependent AMP-binding enzyme family. In terms of tissue distribution, expressed in roots, leaves, stems, flowers and developing seeds.

The protein localises to the peroxisome. It catalyses the reaction acetate + ATP + CoA = acetyl-CoA + AMP + diphosphate. It carries out the reaction a medium-chain fatty acid + ATP + CoA = a medium-chain fatty acyl-CoA + AMP + diphosphate. In terms of biological role, peroxisomal acetate/butyrate--CoA ligase that is probably involved in the activation of exogenous acetate for entry into the glyoxylate cycle. May play a role to prevent carbon loss from peroxisomes during lipid mobilization. In vitro, is active with both acetate and butyrate. The polypeptide is Acetate/butyrate--CoA ligase AAE7, peroxisomal (AAE7) (Arabidopsis thaliana (Mouse-ear cress)).